We begin with the raw amino-acid sequence, 207 residues long: Guanylate kinase (207 aa).

The region spanning 4-184 (NMYYAISAPS…TLNKIKTIII (181 aa)) is the Guanylate kinase-like domain. 11-18 (APSGTGKS) is an ATP binding site.

Belongs to the guanylate kinase family.

The protein resides in the cytoplasm. It catalyses the reaction GMP + ATP = GDP + ADP. Functionally, essential for recycling GMP and indirectly, cGMP. This is Guanylate kinase from Wigglesworthia glossinidia brevipalpis.